The chain runs to 74 residues: Large ribosomal subunit protein bL31 (74 aa).

C16, C18, C38, and C41 together coordinate Zn(2+).

It belongs to the bacterial ribosomal protein bL31 family. Type A subfamily. In terms of assembly, part of the 50S ribosomal subunit. It depends on Zn(2+) as a cofactor.

Its function is as follows. Binds the 23S rRNA. This Salinispora arenicola (strain CNS-205) protein is Large ribosomal subunit protein bL31.